The following is a 142-amino-acid chain: Hemoglobin subunit alpha-B (142 aa).

The Globin domain occupies 2–142; that stretch reads PFSASDRHDI…VSETLYSKYR (141 aa). Residue Gln-59 coordinates O2. His-88 is a heme b binding site.

This sequence belongs to the globin family. In terms of assembly, heterotetramer of either two alpha-B chains or two alpha-C chains and two beta chains. The two major hemoglobins, B and C, associate upon deoxygenation to form a trimer of tetramers, BC2, that has a much lower affinity for oxygen than either component alone. Red blood cells.

Its function is as follows. The alpha-B chain is a component of adult hemoglobin B. The chain is Hemoglobin subunit alpha-B from Aquarana catesbeiana (American bullfrog).